Consider the following 416-residue polypeptide: MFSFYFNDNKITKLLMVGYGSTGKSVCDFLANFIDITVDISQNDDEFVNYDLNSYDLITVSPGIPLNKSPYRALTKFKDKIVSDIDIFYQYIKDTKAKTIAVTGSNGKSTVVTMTDFVLKDLGYKSILVGNIGTPALNKIGEKFDYCVVEVSSFQINLFNCVRFDLGCIINVSPDHLDRYQNFEQYKQSKLNLAKFSNDFFVYDVHNGIKYAGEYQIIRGAIYRNSTKLLDIVETKLFGEHNLENIIVVLNILDRLGLDINQAIDSIKKFKGLEHRCKIVKKVNSTTYINDSKGTNVGATIAALNSITNSKNIILLLGGVAKGGDFSLMIKSLDKYVKYVYIYGADKEYIESYIKGYCKYQLCNNMKQAFELSSQKANSNEIVLLSPACASFDEFSGYAQRGEVFQNLVAQLEQKS.

104-110 (GSNGKST) is a binding site for ATP.

The protein belongs to the MurCDEF family.

The protein resides in the cytoplasm. The catalysed reaction is UDP-N-acetyl-alpha-D-muramoyl-L-alanine + D-glutamate + ATP = UDP-N-acetyl-alpha-D-muramoyl-L-alanyl-D-glutamate + ADP + phosphate + H(+). Its pathway is cell wall biogenesis; peptidoglycan biosynthesis. Cell wall formation. Catalyzes the addition of glutamate to the nucleotide precursor UDP-N-acetylmuramoyl-L-alanine (UMA). This is UDP-N-acetylmuramoylalanine--D-glutamate ligase from Francisella tularensis subsp. tularensis (strain FSC 198).